Reading from the N-terminus, the 142-residue chain is Hemoglobin subunit zeta (142 aa).

Ser2 is modified (N-acetylserine). The 141-residue stretch at 2 to 142 (SLMKNERAII…LSSILTEKYR (141 aa)) folds into the Globin domain. Phosphothreonine is present on Thr29. Ser53 bears the Phosphoserine mark. Residue His59 coordinates heme b. Phosphoserine is present on Ser73. His88 contributes to the heme b binding site.

It belongs to the globin family. Heterotetramer of two zeta chains and beta-type chains.

The zeta chain is an alpha-type chain of mammalian embryonic hemoglobin. The chain is Hemoglobin subunit zeta (Hbz) from Mus musculus (Mouse).